The sequence spans 298 residues: Cell wall protein DAN1 (298 aa).

Residues 1-19 (MSRISILAVAAALVASATA) form the signal peptide. The segment at 122–168 (PASTTEASSTSTSEASSAATESSSSSESSAETSSNAASTQATVSSES) is disordered. Residue N275 is the site of GPI-anchor amidated asparagine attachment. The propeptide at 276 to 298 (GANKFNNGVFGAAAIAGAAALLL) is removed in mature form.

Belongs to the SRP1/TIP1 family. In terms of processing, extensively O-glycosylated. Post-translationally, the GPI-anchor is attached to the protein in the endoplasmic reticulum and serves to target the protein to the cell surface. There, the glucosamine-inositol phospholipid moiety is cleaved off and the GPI-modified mannoprotein is covalently attached via its lipidless GPI glycan remnant to the 1,6-beta-glucan of the outer cell wall layer.

It localises to the secreted. Its subcellular location is the cell wall. The protein localises to the membrane. Functionally, component of the cell wall. This Saccharomyces cerevisiae (strain ATCC 204508 / S288c) (Baker's yeast) protein is Cell wall protein DAN1 (DAN1).